We begin with the raw amino-acid sequence, 277 residues long: Short chain dehydrogenase penD (277 aa).

Ile28, Asp76, and Asn105 together coordinate NADP(+). Catalysis depends on proton donor residues Ser158 and Ser159. Residues Tyr173, Lys177, and Thr209 each contribute to the NADP(+) site. Residue Tyr173 is the Proton acceptor of the active site. Lys177 acts as the Lowers pKa of active site Tyr in catalysis.

It belongs to the short-chain dehydrogenases/reductases (SDR) family.

The enzyme catalyses yaequinolone D + NADPH + H(+) = penigequinolone A + NADP(+) + H2O. It carries out the reaction yaequinolone D + NADPH + H(+) = penigequinolone B + NADP(+) + H2O. Its pathway is secondary metabolite biosynthesis. It functions in the pathway alkaloid biosynthesis. The protein operates within mycotoxin biosynthesis. Short chain dehydrogenase; part of the gene cluster that mediates the biosynthesis of penigequinolones, potent insecticidal alkaloids that contain a highly modified 10-carbon prenyl group. The first stage is catalyzed by the nonribosomal peptide synthetase penN that condenses anthranilic acid and O-methyl-L-tyrosine to produce 4'-methoxycyclopeptin. 4'-methoxycyclopeptin is then converted to 4'-methoxydehydrocyclopeptin by the ketoglutarate-dependent dioxygenase penM through dehydrogenation to form a double bond between C-alpha and C-beta of the O-methyltyrosine side chain. PenM also converts its first product methoxydehydrocyclopeptin to 4'-methoxycyclopenin. The following conversion of 4'methoxycyclopenin into 4'-methoxyviridicatin is catalyzed by the cyclopenase penL. 4'-methoxyviridicatin is the precursor of quinolone natural products, and is further converted to quinolinone B. The prenyltransferase penI then catalyzes the canonical Friedel-Crafts alkylation of quinolinone B with dimethylallyl cation to yield dimethylallyl quinolone, which is subjected to FAD-dependent dehydrogenation by the FAD-linked oxidoreductase penH to yield conjugated aryl diene. The delta(3') double bond then serves as the site of the second alkylation with DMAPP catalyzed by the prenyltransferase penG to yield a carbenium ion intermediate, which can be attacked by H(2)O to yield a styrenyl quinolone containing a C3'-hydroxyprenyl chain, or undergo cyclization to yield yaequinolones J1 and J2. The conversion of the styrenyl quinolone into the tetrahydrofuran-containing yaequinolone C is performed by the FAD-dependent monooxygenase penE and involves epoxidation of the terminal C7'-C8' olefin, followed by epoxide ring opening initiated by the C3' hydroxyl group. The predicted cysteine hydrolase penJ acts as an epoxide hydrolase that enhances the rate of the 5-exo-tet cyclization step, increasing the yield of yaequinolone C. PenF catalyzes the cationic rearrangement of the epoxide formed by penE (before ring opening to produce yaequinolone C) into yaequinolone D. Finally, the short-chain dehydrogenase/reductase (SDR)-like reductase penD, catalyzes both the dehydration of yaequinolone D and the reduction of the resulting oxonium to yield penigequinolone. This chain is Short chain dehydrogenase penD, found in Penicillium thymicola.